The chain runs to 957 residues: Vacuolar membrane protease (957 aa).

Residues 1 to 10 (MARYNPFSFT) lie on the Cytoplasmic side of the membrane. Residues 11 to 31 (PGPVVFFTTVIYVGLFAALLV) form a helical membrane-spanning segment. Residues 32 to 369 (THLTVPDYPS…RVFVVFQLHT (338 aa)) are Vacuolar-facing. 3 N-linked (GlcNAc...) asparagine glycosylation sites follow: asparagine 48, asparagine 105, and asparagine 136. Zn(2+) is bound by residues histidine 152 and aspartate 164. Glutamate 198 functions as the Proton acceptor in the catalytic mechanism. Positions 199, 224, and 297 each coordinate Zn(2+). Residues 370-390 (LFALCVTLLVVAPIALIGLTF) form a helical membrane-spanning segment. Residues 391-423 (GLSKADKNYLLARKAFVYSSDDDNPVQLYGWRG) lie on the Cytoplasmic side of the membrane. The chain crosses the membrane as a helical span at residues 424 to 444 (FFRFPIVFVSATAVVVALAYL). The Vacuolar segment spans residues 445 to 450 (LVRFNA). A helical transmembrane segment spans residues 451–471 (FIIYSSPFAVWSMMLSAWFFV). Over 472–490 (AWFFSRGADAMRPSALQRM) the chain is Cytoplasmic. A helical transmembrane segment spans residues 491 to 511 (YALIWLFIGSFVLLTIITVFV). Residues 512–521 (NNYQVVAGYP) lie on the Vacuolar side of the membrane. The helical transmembrane segment at 522 to 542 (ALFYFAVVFAALMLSYLELFF) threads the bilayer. Over 543–642 (APTKSAYARH…YPGEQEWSGK (100 aa)) the chain is Cytoplasmic. Disordered regions lie at residues 560–591 (RRNS…DATE) and 603–628 (FTRY…RRLD). Residues 564–577 (ESASRPLTGSTTAA) show a composition bias toward polar residues. Residues 643 to 663 (LPSWIWIIQLLLLAPLVIVLV) form a helical membrane-spanning segment. Topologically, residues 664–685 (GQVALLLTSALYQTPSDGNSPL) are vacuolar. Residues 686–706 (FIYLAIAALSVLLLAPTGPFI) form a helical membrane-spanning segment. Over 707–713 (HRFTYHV) the chain is Cytoplasmic. A helical transmembrane segment spans residues 714-734 (PTFLFLVCLATVIYNLVAFPF). The Vacuolar portion of the chain corresponds to 735–957 (SRDHRLKVYF…LVEGFKQFEI (223 aa)). Residues asparagine 782, asparagine 818, and asparagine 834 are each glycosylated (N-linked (GlcNAc...) asparagine).

This sequence belongs to the peptidase M28 family. The cofactor is Zn(2+).

It localises to the vacuole membrane. In terms of biological role, may be involved in vacuolar sorting and osmoregulation. This chain is Vacuolar membrane protease, found in Pyrenophora tritici-repentis (strain Pt-1C-BFP) (Wheat tan spot fungus).